A 293-amino-acid chain; its full sequence is Putative ABC transporter ATP-binding protein AF_0731 (293 aa).

Positions 2 to 236 (IEAVDLHFCY…RKLGIRSFSL (235 aa)) constitute an ABC transporter domain. 34–41 (GRNGAGKT) is an ATP binding site.

The protein belongs to the ABC transporter superfamily.

It localises to the cell membrane. Its function is as follows. Probably part of an ABC transporter complex. Responsible for energy coupling to the transport system. The polypeptide is Putative ABC transporter ATP-binding protein AF_0731 (Archaeoglobus fulgidus (strain ATCC 49558 / DSM 4304 / JCM 9628 / NBRC 100126 / VC-16)).